A 317-amino-acid polypeptide reads, in one-letter code: Inositol oxygenase 4 (317 aa).

Substrate-binding positions include Arg-58 and 115 to 117 (DES). Residues His-128, His-153, and Asp-154 each contribute to the Fe cation site. Substrate-binding positions include Lys-157 and 174 to 175 (GD). Fe cation contacts are provided by His-226, His-252, and Asp-285. Position 252 to 253 (252 to 253 (HS)) interacts with substrate.

It belongs to the myo-inositol oxygenase family. Fe cation serves as cofactor. In terms of tissue distribution, expressed in flowers, leaves, siliques, and to a lesser extent in roots.

It localises to the cytoplasm. The enzyme catalyses myo-inositol + O2 = D-glucuronate + H2O + H(+). The protein operates within polyol metabolism; myo-inositol degradation into D-glucuronate; D-glucuronate from myo-inositol: step 1/1. Catalyzes the oxygenative cleavage of myo-inositol to D-glucuronate. Involved in the biosynthesis of UDP-glucuronic acid (UDP-GlcA), providing nucleotide sugars for cell-wall polymers. May be also involved in plant ascorbate biosynthesis. This chain is Inositol oxygenase 4 (MIOX4), found in Arabidopsis thaliana (Mouse-ear cress).